A 176-amino-acid polypeptide reads, in one-letter code: Translation initiation factor IF-3 (176 aa).

The protein belongs to the IF-3 family. Monomer.

The protein localises to the cytoplasm. Its function is as follows. IF-3 binds to the 30S ribosomal subunit and shifts the equilibrium between 70S ribosomes and their 50S and 30S subunits in favor of the free subunits, thus enhancing the availability of 30S subunits on which protein synthesis initiation begins. This is Translation initiation factor IF-3 from Streptococcus uberis (strain ATCC BAA-854 / 0140J).